The chain runs to 284 residues: NAD kinase (284 aa).

Residue Asp60 is the Proton acceptor of the active site. NAD(+)-binding positions include 60 to 61 (DG), 134 to 135 (ND), Arg145, Lys162, Asp164, 175 to 180 (TAYSFS), and Gln234.

It belongs to the NAD kinase family. A divalent metal cation serves as cofactor.

The protein localises to the cytoplasm. The catalysed reaction is NAD(+) + ATP = ADP + NADP(+) + H(+). Its function is as follows. Involved in the regulation of the intracellular balance of NAD and NADP, and is a key enzyme in the biosynthesis of NADP. Catalyzes specifically the phosphorylation on 2'-hydroxyl of the adenosine moiety of NAD to yield NADP. This is NAD kinase from Clostridium beijerinckii (strain ATCC 51743 / NCIMB 8052) (Clostridium acetobutylicum).